The primary structure comprises 399 residues: MQTLAGKKILLGISGGIAAYKCAELTRRLIERGAQVQVVMTKAAKEFITPLTMQAVSGRPVSDSLLDPAAEASMGHIELAKWADLVLLAPATADLIARMSAGMGNDLLTTLVLATDSPVAVSPAMNQQMYRNIATQENIATLARRGMNIWGPAAGEQACGDVGPGRMLEPMQLVHLCEQFFQPKVLEGKSILISAGPTREAIDPVRYITNHSSGKMGYALANAAAQLGAKVTLVSGPVNLSTPMGVERINVSSAQEMYEAVMAQAISHDAFISCAAVADYRPEAIASQKLKKTADNDQMTIKMVKNPDIVASVAALTDKRPFTVGFAAETNDVETYARGKLAKKNLNMICANDVSVEGQGFNSNDNAITLFWPDGELALALESKEALSFKILEKMRELM.

Positions 1-190 are phosphopantothenoylcysteine decarboxylase; that stretch reads MQTLAGKKIL…FQPKVLEGKS (190 aa). Cys-159 (proton donor) is an active-site residue. A phosphopantothenate--cysteine ligase region spans residues 191–399; sequence ILISAGPTRE…KILEKMRELM (209 aa). CTP-binding positions include Asp-279, Lys-289, 307–310, Phe-326, Lys-340, and Lys-344; that span reads PDIV.

The protein in the N-terminal section; belongs to the HFCD (homo-oligomeric flavin containing Cys decarboxylase) superfamily. It in the C-terminal section; belongs to the PPC synthetase family. Mg(2+) serves as cofactor. It depends on FMN as a cofactor.

It carries out the reaction N-[(R)-4-phosphopantothenoyl]-L-cysteine + H(+) = (R)-4'-phosphopantetheine + CO2. The catalysed reaction is (R)-4'-phosphopantothenate + L-cysteine + CTP = N-[(R)-4-phosphopantothenoyl]-L-cysteine + CMP + diphosphate + H(+). Its pathway is cofactor biosynthesis; coenzyme A biosynthesis; CoA from (R)-pantothenate: step 2/5. It functions in the pathway cofactor biosynthesis; coenzyme A biosynthesis; CoA from (R)-pantothenate: step 3/5. Its function is as follows. Catalyzes two sequential steps in the biosynthesis of coenzyme A. In the first step cysteine is conjugated to 4'-phosphopantothenate to form 4-phosphopantothenoylcysteine. In the second step the latter compound is decarboxylated to form 4'-phosphopantotheine. This is Coenzyme A biosynthesis bifunctional protein CoaBC from Vibrio parahaemolyticus serotype O3:K6 (strain RIMD 2210633).